The primary structure comprises 241 residues: Probable transcriptional regulatory protein LMOf2365_1554 (241 aa).

Polar residues predominate over residues 1-14; that stretch reads MSGHSKWNNIQGRK. A disordered region spans residues 1 to 22; sequence MSGHSKWNNIQGRKNAQDSKRS.

This sequence belongs to the TACO1 family.

The protein resides in the cytoplasm. The chain is Probable transcriptional regulatory protein LMOf2365_1554 from Listeria monocytogenes serotype 4b (strain F2365).